The primary structure comprises 283 residues: Thymidylate synthase (283 aa).

Arg22 lines the dUMP pocket. Cys160 (nucleophile) is an active-site residue. DUMP is bound by residues 180–183, Asn191, and 221–223; these read RSCD and HIY. Asp183 is a (6R)-5,10-methylene-5,6,7,8-tetrahydrofolate binding site. Residue Ser282 coordinates (6R)-5,10-methylene-5,6,7,8-tetrahydrofolate.

It belongs to the thymidylate synthase family. Bacterial-type ThyA subfamily. In terms of assembly, homodimer.

Its subcellular location is the cytoplasm. The enzyme catalyses dUMP + (6R)-5,10-methylene-5,6,7,8-tetrahydrofolate = 7,8-dihydrofolate + dTMP. Its pathway is pyrimidine metabolism; dTTP biosynthesis. Functionally, catalyzes the reductive methylation of 2'-deoxyuridine-5'-monophosphate (dUMP) to 2'-deoxythymidine-5'-monophosphate (dTMP) while utilizing 5,10-methylenetetrahydrofolate (mTHF) as the methyl donor and reductant in the reaction, yielding dihydrofolate (DHF) as a by-product. This enzymatic reaction provides an intracellular de novo source of dTMP, an essential precursor for DNA biosynthesis. This Shewanella sediminis (strain HAW-EB3) protein is Thymidylate synthase.